The following is a 124-amino-acid chain: Seripauperin-19 (124 aa).

The N-terminal stretch at 1 to 20 (MVKLTSIAAGVAAIAAGVAA) is a signal peptide.

Belongs to the SRP1/TIP1 family. Seripauperin subfamily.

The polypeptide is Seripauperin-19 (PAU19) (Saccharomyces cerevisiae (strain ATCC 204508 / S288c) (Baker's yeast)).